We begin with the raw amino-acid sequence, 259 residues long: Type III pantothenate kinase (259 aa).

6–13 provides a ligand contact to ATP; it reads DVGNTNCT. 107 to 110 contributes to the substrate binding site; sequence GSDR. Catalysis depends on D109, which acts as the Proton acceptor. D129 serves as a coordination point for K(+). Residue T132 participates in ATP binding. Substrate is bound at residue T184.

The protein belongs to the type III pantothenate kinase family. Homodimer. Requires NH4(+) as cofactor. The cofactor is K(+).

Its subcellular location is the cytoplasm. It carries out the reaction (R)-pantothenate + ATP = (R)-4'-phosphopantothenate + ADP + H(+). It functions in the pathway cofactor biosynthesis; coenzyme A biosynthesis; CoA from (R)-pantothenate: step 1/5. Catalyzes the phosphorylation of pantothenate (Pan), the first step in CoA biosynthesis. In Listeria monocytogenes serotype 4b (strain CLIP80459), this protein is Type III pantothenate kinase.